Reading from the N-terminus, the 843-residue chain is Respiratory burst oxidase homolog protein B (843 aa).

Acidic residues predominate over residues 1-10 (MREEEMESSS). Positions 1-27 (MREEEMESSSEGETNKISRCKATGSDN) are disordered. Residues 1-297 (MREEEMESSS…SYFFLENWKR (297 aa)) are Cytoplasmic-facing. EF-hand-like stretches follow at residues 114–122 (AVEGKLPKS) and 148–159 (RGTTSSSITKTE). EF-hand domains lie at 171–206 (SFDDRLQIFFDMVDKNLDGRITGDEVKEIIALSASA) and 215–250 (NVDEYAALIMEELDRDNLGYIELHNLETLLLQVPSQ). Asp-184, Asn-186, Asp-188, Arg-190, and Glu-195 together coordinate Ca(2+). Ser-268 carries the phosphoserine modification. A helical membrane pass occupies residues 298–318 (IWVLTLWISICITLFTWKFLQ). The Extracellular portion of the chain corresponds to 319-383 (YKRKTVFEVM…FDDNINFHKV (65 aa)). Positions 336-495 (KGSAETLKFN…LFVIVYVLLI (160 aa)) constitute a Ferric oxidoreductase domain. A helical membrane pass occupies residues 384-404 (VAFGIAVGIGLHAISHLACDF). Residues 405–439 (PRLLHAKNVEFEPMKKFFGDERPENYGWFMKGTDG) lie on the Cytoplasmic side of the membrane. A helical membrane pass occupies residues 440–460 (WTGVTMVVLMLVAYVLAQSWF). Topologically, residues 461–482 (RRNRANLPKSLKRLTGFNAFWY) are extracellular. The chain crosses the membrane as a helical span at residues 483–503 (SHHLFVIVYVLLIVHGYFVYL). Residues 504–511 (SKEWYHKT) lie on the Cytoplasmic side of the membrane. Residues 512 to 529 (TWMYLAVPVLLYAFERLI) traverse the membrane as a helical segment. The Extracellular portion of the chain corresponds to 530-659 (RAFRPGAKAV…PYGAPAQDYR (130 aa)). The 124-residue stretch at 534–657 (PGAKAVKVLK…DGPYGAPAQD (124 aa)) folds into the FAD-binding FR-type domain. A helical transmembrane segment spans residues 660–680 (NYDVLLLVGLGIGATPLISII). The Cytoplasmic portion of the chain corresponds to 681–843 (RDVLNNIKNQ…TKFEFHKENF (163 aa)).

The protein belongs to the RBOH (TC 5.B.1.3) family. As to quaternary structure, monomer and homodimer.

Its subcellular location is the membrane. Functionally, calcium-dependent NADPH oxidase that generates superoxide. This chain is Respiratory burst oxidase homolog protein B (RBOHB), found in Arabidopsis thaliana (Mouse-ear cress).